A 317-amino-acid chain; its full sequence is Ribonuclease Z (317 aa).

Zn(2+) is bound by residues His63, His65, Asp67, His68, His143, Asp214, and His272. Catalysis depends on Asp67, which acts as the Proton acceptor.

The protein belongs to the RNase Z family. Homodimer. Requires Zn(2+) as cofactor.

The catalysed reaction is Endonucleolytic cleavage of RNA, removing extra 3' nucleotides from tRNA precursor, generating 3' termini of tRNAs. A 3'-hydroxy group is left at the tRNA terminus and a 5'-phosphoryl group is left at the trailer molecule.. Zinc phosphodiesterase, which displays some tRNA 3'-processing endonuclease activity. Probably involved in tRNA maturation, by removing a 3'-trailer from precursor tRNA. In Ligilactobacillus salivarius (strain UCC118) (Lactobacillus salivarius), this protein is Ribonuclease Z.